The sequence spans 359 residues: Peptide chain release factor 1 (359 aa).

Position 235 is an N5-methylglutamine (Gln-235).

It belongs to the prokaryotic/mitochondrial release factor family. In terms of processing, methylated by PrmC. Methylation increases the termination efficiency of RF1.

The protein localises to the cytoplasm. Peptide chain release factor 1 directs the termination of translation in response to the peptide chain termination codons UAG and UAA. The sequence is that of Peptide chain release factor 1 from Polynucleobacter necessarius subsp. necessarius (strain STIR1).